The chain runs to 746 residues: MSSDTSSSRPPQPDSGTASKSESENPAIPSPKPKAHAPLTNRDWWPDQVDVSSLHPHSPLSNPLGDDFDYAAEFAKLDVEALKADMISLMTTSQDWWPADYGHYGGLFIRMSWHAAGTYRIHDGRGGAGQGMQRFAPLNSWPDNASLDKARRLLWPIKKKYGNKISWADLITYAGNVALESMGFKTFGFGFGREDVWEPEEILWGEEEEWLGTDKRYSGERELAQPYGATTMGLIYVNPEGPEGKPDPIAAAIDIRETFGRMAMNDEETAALIVGGHSFGKTHGAGDADLVGPEPEAAPIEQQGLGWKSSYGTGSGKDAITSGLEVVWTPTPTKWDNSFLETLYGYEWELTKSPAGAWQFTAKDGAGAGTIPDPFGGAGRAPTMLVTDISLRESPIYADITRRWLDHPEELADAFAKAWYKLLHRDMGPISRYLGPWVAEPQLWQDPVPAVDHELVDDNDVAALKKKVLDSGLSIPQLVKTAWSAAASYRNTDKRGGANGGRLRLQPQRSWEVNEPSELDKVLPVLEKIQQDFNASASGGKKISLADLIVLAGSAAVEKAAKDAGYEISVHFAPGRTDASQESTDVESFAVLEPRADGFRNYIRPGEKAPLEQLLIERAYLLGVTGPEMTVLVGGLRALGANHGSSKHGVFTDRPGALTNDFFVNLLDMGTEWKASETAENVYEGRDRASGALKWTATANDLVFGSNSVLRGLVEVYAQDDAHGKFVEDFVAAWVKVMNSDRFDLK.

Over residues 1–20 (MSSDTSSSRPPQPDSGTASK) the composition is skewed to polar residues. The disordered stretch occupies residues 1 to 42 (MSSDTSSSRPPQPDSGTASKSESENPAIPSPKPKAHAPLTNR). The tryptophyl-tyrosyl-methioninium (Trp-Tyr) (with M-262) cross-link spans 113–236 (WHAAGTYRIH…YGATTMGLIY (124 aa)). His114 functions as the Proton acceptor in the catalytic mechanism. Positions 236–262 (YVNPEGPEGKPDPIAAAIDIRETFGRM) form a cross-link, tryptophyl-tyrosyl-methioninium (Tyr-Met) (with W-113). His277 contacts heme b.

This sequence belongs to the peroxidase family. Peroxidase/catalase subfamily. In terms of assembly, homodimer or homotetramer. It depends on heme b as a cofactor. Post-translationally, formation of the three residue Trp-Tyr-Met cross-link is important for the catalase, but not the peroxidase activity of the enzyme.

The catalysed reaction is H2O2 + AH2 = A + 2 H2O. It catalyses the reaction 2 H2O2 = O2 + 2 H2O. Functionally, bifunctional enzyme with both catalase and broad-spectrum peroxidase activity. May play a role in the intracellular survival of mycobacteria. The protein is Catalase-peroxidase of Mycobacterium intracellulare.